Reading from the N-terminus, the 523-residue chain is MSQQVIIFDTTLRDGEQALQASLSVKEKLQIALALERMGVDVMEVGFPVSSPGDFESVQTIARQVKNSRVCALARCVEKDIDVAAESLKVAEAFRIHTFIATSPMHIATKLRSTLDEVIERAIYMVKRARNYTDDVEFSCEDAGRTPIADLARVVEAAINAGATTINIPDTVGYTMPFEFAGIISGLYERVPNIDKAIISVHTHDDLGLAVGNSLAAVHAGARQVEGAMNGIGERAGNCSLEEVIMAIKVRKDILNVHTAINHQEIWRTSQLVSQICNMPIPANKAIVGSGAFAHSSGIHQDGVLKNRENYEIMTPESIGLNQIQLNLTSRSGRAAVKHRMDEMGYKESEYNLDNLYDAFLKLADKKGQVFDYDLEALAFIGKQQEEPEHFRLDYFSVQSGSNDIATAAVKLACGEEVKAEAANGNGPVDAVYQAINRITEYNVELVKYSLTAKGHGKDALGQVDIVANYNGRRFHGVGLATDIVESSAKAMVHVLNNIWRAAEVEKELQRKAQHNENNKETV.

Positions 5 to 267 (VIIFDTTLRD…HTAINHQEIW (263 aa)) constitute a Pyruvate carboxyltransferase domain. 4 residues coordinate Mn(2+): Asp-14, His-202, His-204, and Asn-238. The tract at residues 392 to 523 (RLDYFSVQSG…QHNENNKETV (132 aa)) is regulatory domain.

The protein belongs to the alpha-IPM synthase/homocitrate synthase family. LeuA type 1 subfamily. In terms of assembly, homodimer. Mn(2+) is required as a cofactor.

It is found in the cytoplasm. The catalysed reaction is 3-methyl-2-oxobutanoate + acetyl-CoA + H2O = (2S)-2-isopropylmalate + CoA + H(+). It functions in the pathway amino-acid biosynthesis; L-leucine biosynthesis; L-leucine from 3-methyl-2-oxobutanoate: step 1/4. Functionally, catalyzes the condensation of the acetyl group of acetyl-CoA with 3-methyl-2-oxobutanoate (2-ketoisovalerate) to form 3-carboxy-3-hydroxy-4-methylpentanoate (2-isopropylmalate). This chain is 2-isopropylmalate synthase, found in Escherichia coli (strain K12 / MC4100 / BW2952).